Consider the following 79-residue polypeptide: UPF0180 protein BCE_1513 (79 aa).

It belongs to the UPF0180 family.

The polypeptide is UPF0180 protein BCE_1513 (Bacillus cereus (strain ATCC 10987 / NRS 248)).